A 185-amino-acid polypeptide reads, in one-letter code: Ribosome-recycling factor (185 aa).

The protein belongs to the RRF family.

It localises to the cytoplasm. Responsible for the release of ribosomes from messenger RNA at the termination of protein biosynthesis. May increase the efficiency of translation by recycling ribosomes from one round of translation to another. The protein is Ribosome-recycling factor of Teredinibacter turnerae (strain ATCC 39867 / T7901).